The chain runs to 227 residues: Cytochrome c oxidase subunit 2 (227 aa).

The Mitochondrial intermembrane portion of the chain corresponds to 1 to 14 (MAYPFQLGLQDATS). The chain crosses the membrane as a helical span at residues 15 to 45 (PIMEELLHFHDHTLMIVFLISSLILYIISLM). The Mitochondrial matrix portion of the chain corresponds to 46–59 (LTTKLTHTSTMDAQ). The chain crosses the membrane as a helical span at residues 60 to 87 (EVETVWTILPAIILILIALPSLRILYMM). Residues 88–227 (DEINNPSLTV…YFETWSALMV (140 aa)) lie on the Mitochondrial intermembrane side of the membrane. Cu cation-binding residues include histidine 161, cysteine 196, glutamate 198, cysteine 200, histidine 204, and methionine 207. Residue glutamate 198 coordinates Mg(2+). Tyrosine 218 is subject to Phosphotyrosine.

Belongs to the cytochrome c oxidase subunit 2 family. As to quaternary structure, component of the cytochrome c oxidase (complex IV, CIV), a multisubunit enzyme composed of 14 subunits. The complex is composed of a catalytic core of 3 subunits MT-CO1, MT-CO2 and MT-CO3, encoded in the mitochondrial DNA, and 11 supernumerary subunits COX4I, COX5A, COX5B, COX6A, COX6B, COX6C, COX7A, COX7B, COX7C, COX8 and NDUFA4, which are encoded in the nuclear genome. The complex exists as a monomer or a dimer and forms supercomplexes (SCs) in the inner mitochondrial membrane with NADH-ubiquinone oxidoreductase (complex I, CI) and ubiquinol-cytochrome c oxidoreductase (cytochrome b-c1 complex, complex III, CIII), resulting in different assemblies (supercomplex SCI(1)III(2)IV(1) and megacomplex MCI(2)III(2)IV(2)). Found in a complex with TMEM177, COA6, COX18, COX20, SCO1 and SCO2. Interacts with TMEM177 in a COX20-dependent manner. Interacts with COX20. Interacts with COX16. The cofactor is Cu cation.

The protein localises to the mitochondrion inner membrane. It carries out the reaction 4 Fe(II)-[cytochrome c] + O2 + 8 H(+)(in) = 4 Fe(III)-[cytochrome c] + 2 H2O + 4 H(+)(out). Its function is as follows. Component of the cytochrome c oxidase, the last enzyme in the mitochondrial electron transport chain which drives oxidative phosphorylation. The respiratory chain contains 3 multisubunit complexes succinate dehydrogenase (complex II, CII), ubiquinol-cytochrome c oxidoreductase (cytochrome b-c1 complex, complex III, CIII) and cytochrome c oxidase (complex IV, CIV), that cooperate to transfer electrons derived from NADH and succinate to molecular oxygen, creating an electrochemical gradient over the inner membrane that drives transmembrane transport and the ATP synthase. Cytochrome c oxidase is the component of the respiratory chain that catalyzes the reduction of oxygen to water. Electrons originating from reduced cytochrome c in the intermembrane space (IMS) are transferred via the dinuclear copper A center (CU(A)) of subunit 2 and heme A of subunit 1 to the active site in subunit 1, a binuclear center (BNC) formed by heme A3 and copper B (CU(B)). The BNC reduces molecular oxygen to 2 water molecules using 4 electrons from cytochrome c in the IMS and 4 protons from the mitochondrial matrix. The protein is Cytochrome c oxidase subunit 2 (MT-CO2) of Canis simensis (Ethiopian wolf).